We begin with the raw amino-acid sequence, 323 residues long: Putative divalent cation/proton antiporter TMEM165 (323 aa).

The N-terminal stretch at 1–33 (MAASARGSGRAPTRRLLVLLLLPLLWAPAGVRA) is a signal peptide. Topologically, residues 34-88 (GPEEDLSHRNQEPPAPAQQLQPQPAAVQGLEPARAEKGFTPAAPVHTNREDAATQ) are lumenal. Positions 35–44 (PEEDLSHRNQ) are enriched in basic and acidic residues. Residues 35-60 (PEEDLSHRNQEPPAPAQQLQPQPAAV) form a disordered region. Over residues 50–59 (AQQLQPQPAA) the composition is skewed to low complexity. The helical transmembrane segment at 89–109 (ANLGFIHAFVAAISVIIVSEL) threads the bilayer. The Cytoplasmic segment spans residues 110 to 126 (GDKTFFIAAIMAMRYNR). Residues 127 to 147 (LTVLAGAMLALALMTCLSVLF) form a helical membrane-spanning segment. Topologically, residues 148–151 (GYAT) are lumenal. The chain crosses the membrane as a helical span at residues 152-172 (TVIPRVYTYYVSTALFAIFGI). Residues 173-227 (RMLREGLKMSPDEGQEELEEVQAELKKKDEEFQRTKLLNGPDVETGTSTAIPQKK) lie on the Cytoplasmic side of the membrane. The stretch at 184–211 (DEGQEELEEVQAELKKKDEEFQRTKLLN) forms a coiled coil. Residues 228 to 248 (WLHFISPIFVQALTLTFLAEW) traverse the membrane as a helical segment. Residues 249-266 (GDRSQLTTIVLAAREDPY) lie on the Lumenal side of the membrane. The helical transmembrane segment at 267–287 (GVAVGGTVGHCLCTGLAVIGG) threads the bilayer. Residues 288–298 (RMIAQKISVRT) lie on the Cytoplasmic side of the membrane. A helical transmembrane segment spans residues 299–319 (VTIIGGIVFLAFAFSALFISP). Residues 320 to 323 (ESGF) lie on the Lumenal side of the membrane.

It belongs to the GDT1 family.

It is found in the golgi apparatus membrane. It carries out the reaction Ca(2+)(in) + n H(+)(out) = Ca(2+)(out) + n H(+)(in). The enzyme catalyses Mn(2+)(in) + n H(+)(out) = Mn(2+)(out) + n H(+)(in). Its function is as follows. Putative divalent cation:proton antiporter that exchanges calcium or manganese ions for protons across the Golgi membrane. Mediates the reversible transport of calcium or manganese to the Golgi lumen driven by the proton gradient and possibly the membrane potential generated by V-ATPase. Provides calcium or manganese cofactors to resident Golgi enzymes and contributes to the maintenance of an acidic luminal Golgi pH required for proper functioning of the secretory pathway. Promotes Ca(2+) storage within the Golgi lumen of the mammary epithelial cells to be then secreted into milk. The transport mechanism and stoichiometry remains to be elucidated. The polypeptide is Putative divalent cation/proton antiporter TMEM165 (Rattus norvegicus (Rat)).